We begin with the raw amino-acid sequence, 130 residues long: Cystatin (130 aa).

A signal peptide spans 1–19 (MEWKIVVPLLAVAFTVANA). The Secondary area of contact signature appears at 67 to 71 (QVVSG). 2 disulfide bridges follow: C85-C94 and C108-C128.

Belongs to the cystatin family. In terms of tissue distribution, ubiquitous expression including brain, white muscle, heart, gill, kidney, spleen, liver and skin with the highest and lowest level in brain and gill, respectively.

Its subcellular location is the secreted. Functionally, cysteine proteinase inhibitor. This Oncorhynchus keta (Chum salmon) protein is Cystatin.